We begin with the raw amino-acid sequence, 375 residues long: Enoyl-[acyl-carrier-protein] reductase [NADH] 1, chloroplastic (375 aa).

A chloroplast-targeting transit peptide spans 1–67 (MGASAATGMQ…SSKRSGVAIR (67 aa)). NAD(+)-binding positions include G91, Y98, 155–156 (DA), 202–203 (SL), and L252. Catalysis depends on proton acceptor residues Y254 and Y264. NAD(+)-binding positions include K272 and 302 to 306 (LGSRA).

The protein belongs to the short-chain dehydrogenases/reductases (SDR) family. FabI subfamily. As to quaternary structure, homotetramer.

The protein resides in the plastid. Its subcellular location is the chloroplast. The enzyme catalyses a 2,3-saturated acyl-[ACP] + NAD(+) = a (2E)-enoyl-[ACP] + NADH + H(+). It functions in the pathway lipid metabolism; fatty acid biosynthesis. Its function is as follows. Catalyzes the NAD-dependent reduction of a carbon-carbon double bond in an enoyl moiety that is covalently linked to an acyl carrier protein (ACP). Catalyzes the last reduction step in the de novo synthesis cycle of fatty acids. Involved in the elongation cycle of fatty acids which are used in lipid metabolism. Required for normal plant growth. The sequence is that of Enoyl-[acyl-carrier-protein] reductase [NADH] 1, chloroplastic from Oryza sativa subsp. japonica (Rice).